The sequence spans 218 residues: Glutathione S-transferase A (218 aa).

N-acetylserine is present on Ser-1. A GST N-terminal domain is found at 2-82 (GKPVLHYFNV…YIATKYNLYG (81 aa)). Lys-3 carries the N6-succinyllysine modification. Residues Tyr-8, Lys-44, 53–54 (QV), and 66–67 (QS) each bind glutathione. Positions 84 to 206 (DTKERLLIDM…LQPGSQRKPF (123 aa)) constitute a GST C-terminal domain.

This sequence belongs to the GST superfamily. Alpha family. As to quaternary structure, homodimer or heterodimer of GSTA1 and GSTA2.

Its subcellular location is the cytoplasm. It carries out the reaction RX + glutathione = an S-substituted glutathione + a halide anion + H(+). The enzyme catalyses prostaglandin A2 + glutathione = prostaglandin A2-S-(R)-glutathione. It catalyses the reaction prostaglandin J2 + glutathione = prostaglandin J2-S-(R)-glutathione. The catalysed reaction is (13S)-hydroperoxy-(9Z,11E)-octadecadienoate + 2 glutathione = (13S)-hydroxy-(9Z,11E)-octadecadienoate + glutathione disulfide + H2O. It carries out the reaction androst-5-ene-3,17-dione = androst-4-ene-3,17-dione. Functionally, glutathione S-transferase that catalyzes the nucleophilic attack of the sulfur atom of glutathione on the electrophilic groups of a wide range of exogenous and endogenous compounds. Involved in the formation of glutathione conjugates of both prostaglandin A2 (PGA2) and prostaglandin J2 (PGJ2). It also catalyzes the isomerization of D5-androstene-3,17-dione (AD) into D4-androstene-3,17-dione and may therefore play an important role in hormone biosynthesis. Through its glutathione-dependent peroxidase activity toward the fatty acid hydroperoxide (13S)-hydroperoxy-(9Z,11E)-octadecadienoate/13-HPODE it is also involved in the metabolism of oxidized linoleic acid. The chain is Glutathione S-transferase A from Cavia porcellus (Guinea pig).